The following is a 636-amino-acid chain: Chitin synthase VI (636 aa).

4 consecutive transmembrane segments (helical) span residues 23-43 (LQWF…LFCI), 374-394 (TIRT…TTTA), 399-419 (LPVG…LYFG), and 427-447 (IWFY…YMVY). The segment at 595–636 (QRLRLEQRPRTGPSLNARWQNGPQASETSQGRSQVDDVGIAF) is disordered. Over residues 607-627 (PSLNARWQNGPQASETSQGRS) the composition is skewed to polar residues.

Belongs to the chitin synthase family. Class VI subfamily. As to expression, moderately expressed during appressorium formation.

It localises to the cell membrane. The catalysed reaction is [(1-&gt;4)-N-acetyl-beta-D-glucosaminyl](n) + UDP-N-acetyl-alpha-D-glucosamine = [(1-&gt;4)-N-acetyl-beta-D-glucosaminyl](n+1) + UDP + H(+). In terms of biological role, polymerizes chitin, a structural polymer of the cell wall and septum, by transferring the sugar moiety of UDP-GlcNAc to the non-reducing end of the growing chitin polymer. Contributes to the production of conidia but is the only chitine synthase that does not contribute to the ability of fungal conidia to germinate. Involved in fungal stress tolerances. In Metarhizium acridum (strain CQMa 102), this protein is Chitin synthase VI.